The following is a 106-amino-acid chain: MLNRIIYDPFNDGLDTEQHFEKIHIKTKQRTKTKSITIIENIPEKIDLKLFLKKLKYTFHCSGSIQQNYDDDSKFIQLSGDHRELVKNFLIKNSIVKESNIVMHGY.

Belongs to the SUI1 family.

Additional factor that functions in concert with eIF-2 and the initiator tRNA in directing the ribosome to the proper start site of translation. This is Protein translation factor SUI1 homolog from Acanthamoeba polyphaga mimivirus (APMV).